The primary structure comprises 130 residues: Small ribosomal subunit protein uS9 (130 aa).

The protein belongs to the universal ribosomal protein uS9 family.

The chain is Small ribosomal subunit protein uS9 from Blochmanniella floridana.